The following is a 547-amino-acid chain: Glucose-6-phosphate isomerase 2 (547 aa).

E351 functions as the Proton donor in the catalytic mechanism. Residues H382 and K508 contribute to the active site.

The protein belongs to the GPI family.

Its subcellular location is the cytoplasm. The catalysed reaction is alpha-D-glucose 6-phosphate = beta-D-fructose 6-phosphate. The protein operates within carbohydrate biosynthesis; gluconeogenesis. It functions in the pathway carbohydrate degradation; glycolysis; D-glyceraldehyde 3-phosphate and glycerone phosphate from D-glucose: step 2/4. Catalyzes the reversible isomerization of glucose-6-phosphate to fructose-6-phosphate. This is Glucose-6-phosphate isomerase 2 from Neisseria meningitidis serogroup B (strain ATCC BAA-335 / MC58).